We begin with the raw amino-acid sequence, 92 residues long: Small ribosomal subunit protein bS20 (92 aa).

The interval 1–23 is disordered; that stretch reads MANSPSAKKRAKQAEKRRSHNAS. Residues 7-20 show a composition bias toward basic residues; it reads AKKRAKQAEKRRSH.

This sequence belongs to the bacterial ribosomal protein bS20 family.

In terms of biological role, binds directly to 16S ribosomal RNA. This is Small ribosomal subunit protein bS20 from Ectopseudomonas mendocina (strain ymp) (Pseudomonas mendocina).